A 147-amino-acid polypeptide reads, in one-letter code: Large ribosomal subunit protein mL40 (147 aa).

The transit peptide at 1 to 26 directs the protein to the mitochondrion; it reads MLAQTFKKPHRAVLEQVSGTTVFIRN.

Belongs to the mitochondrion-specific ribosomal protein mL40 family. Component of the mitochondrial large ribosomal subunit (mt-LSU). Mature yeast 74S mitochondrial ribosomes consist of a small (37S) and a large (54S) subunit. The 37S small subunit contains a 15S ribosomal RNA (15S mt-rRNA) and 34 different proteins. The 54S large subunit contains a 21S rRNA (21S mt-rRNA) and 46 different proteins.

The protein resides in the mitochondrion. Functionally, component of the mitochondrial ribosome (mitoribosome), a dedicated translation machinery responsible for the synthesis of mitochondrial genome-encoded proteins, including at least some of the essential transmembrane subunits of the mitochondrial respiratory chain. The mitoribosomes are attached to the mitochondrial inner membrane and translation products are cotranslationally integrated into the membrane. This is Large ribosomal subunit protein mL40 (MRPL28) from Saccharomyces cerevisiae (strain ATCC 204508 / S288c) (Baker's yeast).